The following is an 856-amino-acid chain: MSMGGGSNHEFGQWLDQQLVPLATSSGSLMVELLHGNLDIWVKEAKHLPNMICYRNKLVGGISFSELGRRIRKVDGEKSSKFTSDPYVTVSISGAVIGRTFVISNSENPVWMQHFDVPVAHSAAEVHFVVKDNDPIGSKIIGVVGIPTKQLCSGNRIEGLFPILNSSGKPCRKGAMLSLSIQYTPMERMRLYQKGVGSGVECVGVPGTYFPLRKGGRVTLYQDAHVDDGTLPSVHLDGGIQYRHGKCWEDMADAIRRARRLIYITGWSVFHPVRLVRRNNDPTEGTLGELLKVKSQEGVRVLVLVWDDPTSMSFPGFSTKGLMNTSDEETRRFFKHSSVQVLLCPRYGGKGHSFIKKSEVETIYTHHQKTMIVDAEAAQNRRKIVAFVGGLDLCNGRFDTPKHSLFGTLKTLHKDDFHNPNFVTTEDVGPREPWHDLHSKIDGPAAYDVLANFEERWMASKPRGIGKGRTSFDDSLLRINRIPDIMGLSEASSANDNDPESWHVQVFRSIDSTSVKGFPKDPEEATGRNLLCGKNILIDMSIHAAYVKAIRSAQHFIYIENQYFLGSSFNWDSNKDLGANNLIPMEIALKIANKIRARENFAAYIVIPMWPEGAPTSKPIQRILYWQHKTMQMMYQTIYKALLEVGLDGQLEPQDFLNFFCLGNREVGTREVPDGTVNVYNCPRKPPQPNAAQVQALKSRRFMIYVHSKGMVVDDEFVLIGSANINQRSLEGTRDTEIAMGGYQPHHSWAKKGSRPRGQIFGYRMSLWAEHLGFLEQEFEEPENMECVRRVRQLSELNWGQYAAEEVTEMSGHLLKYPVQVDKTGKVSSLPGCETFPDLGGKIIGSFLTLQENLTI.

In terms of domain architecture, C2 spans 21 to 161 (PLATSSGSLM…CSGNRIEGLF (141 aa)). A Ca(2+)-binding site is contributed by Asp-223. Residues 362–397 (TIYTHHQKTMIVDAEAAQNRRKIVAFVGGLDLCNGR) enclose the PLD phosphodiesterase 1 domain. Residues His-367, Lys-369, and Asp-374 contribute to the active site. His-367 lines the a 1,2-diacyl-sn-glycero-3-phosphate pocket. Ca(2+)-binding residues include His-403 and His-435. A 1,2-diacyl-sn-glycero-3-phosphate contacts are provided by Gln-562 and His-707. The 28-residue stretch at 702-729 (FMIYVHSKGMVVDDEFVLIGSANINQRS) folds into the PLD phosphodiesterase 2 domain. Active-site residues include His-707, Lys-709, and Asp-714. A Ca(2+)-binding site is contributed by Glu-770.

It belongs to the phospholipase D family. C2-PLD subfamily. Requires Ca(2+) as cofactor. As to expression, highly expressed in roots and flowers, moderately in stems, leaves and seedlings and low in siliques. Not detected in seeds.

The protein localises to the cytoplasm. The protein resides in the membrane. The catalysed reaction is a 1,2-diacyl-sn-glycero-3-phosphocholine + H2O = a 1,2-diacyl-sn-glycero-3-phosphate + choline + H(+). Inhibited by neomycin. In terms of biological role, hydrolyzes glycerol-phospholipids at the terminal phosphodiesteric bond to generate phosphatidic acids (PA). Plays an important role in various cellular processes, including phytohormone action, vesicular trafficking, secretion, cytoskeletal arrangement, meiosis, tumor promotion, pathogenesis, membrane deterioration and senescence. Can use phosphatidylserine but prefers ethanolamine-containing lipids as substrates. Can use phosphatidylcholine (PC) as substrates in the presence of phosphatidylethanolamine (PE) and PIP2. Involved in membrane lipid modulation under aluminum (Al) stress and negatively modulate plant tolerance to Al. This chain is Phospholipase D gamma 2, found in Arabidopsis thaliana (Mouse-ear cress).